The following is a 383-amino-acid chain: 8-amino-7-oxononanoate synthase (383 aa).

A substrate-binding site is contributed by R21. A pyridoxal 5'-phosphate-binding site is contributed by 108 to 109 (GY). H133 contacts substrate. Pyridoxal 5'-phosphate-binding residues include S179, H207, and T233. At K236 the chain carries N6-(pyridoxal phosphate)lysine. T350 lines the substrate pocket.

This sequence belongs to the class-II pyridoxal-phosphate-dependent aminotransferase family. BioF subfamily. As to quaternary structure, homodimer. Pyridoxal 5'-phosphate is required as a cofactor.

It carries out the reaction 6-carboxyhexanoyl-[ACP] + L-alanine + H(+) = (8S)-8-amino-7-oxononanoate + holo-[ACP] + CO2. Its pathway is cofactor biosynthesis; biotin biosynthesis. Its function is as follows. Catalyzes the decarboxylative condensation of pimeloyl-[acyl-carrier protein] and L-alanine to produce 8-amino-7-oxononanoate (AON), [acyl-carrier protein], and carbon dioxide. This is 8-amino-7-oxononanoate synthase from Yersinia pestis bv. Antiqua (strain Angola).